The sequence spans 124 residues: Large ribosomal subunit protein bL12 (124 aa).

The protein belongs to the bacterial ribosomal protein bL12 family. As to quaternary structure, homodimer. Part of the ribosomal stalk of the 50S ribosomal subunit. Forms a multimeric L10(L12)X complex, where L10 forms an elongated spine to which 2 to 4 L12 dimers bind in a sequential fashion. Binds GTP-bound translation factors.

Its function is as follows. Forms part of the ribosomal stalk which helps the ribosome interact with GTP-bound translation factors. Is thus essential for accurate translation. The polypeptide is Large ribosomal subunit protein bL12 (Burkholderia thailandensis (strain ATCC 700388 / DSM 13276 / CCUG 48851 / CIP 106301 / E264)).